Here is a 265-residue protein sequence, read N- to C-terminus: Dehydrogenase RED2 (265 aa).

The chain crosses the membrane as a helical span at residues 6–26 (SFLLSKLFLCIALCTAYVAFS). N45 carries an N-linked (GlcNAc...) asparagine glycan. Residues 47–67 (TSTVFGLTIVAIGLSALSSWL) traverse the membrane as a helical segment. N-linked (GlcNAc...) asparagine glycosylation occurs at N74. Position 89 (V89) interacts with NADP(+). N127 is a glycosylation site (N-linked (GlcNAc...) asparagine). 2 residues coordinate NADP(+): D136 and N163. An N-linked (GlcNAc...) asparagine glycan is attached at N176. S216 (proton donor) is an active-site residue. Residues Y228 and K232 each contribute to the NADP(+) site. Residue Y228 is the Proton acceptor of the active site. K232 functions as the Lowers pKa of active site Tyr in the catalytic mechanism.

It belongs to the short-chain dehydrogenases/reductases (SDR) family.

Its subcellular location is the membrane. The enzyme catalyses a primary alcohol + NAD(+) = an aldehyde + NADH + H(+). The catalysed reaction is a secondary alcohol + NAD(+) = a ketone + NADH + H(+). The protein operates within mycotoxin biosynthesis. Functionally, dehydrogenase; part of the Tox1B locus, one of the 2 loci that mediate the biosynthesis of T-toxin, a family of linear polyketides 37 to 45 carbons in length, of which the major component is 41 carbons, and which leads to high virulence to maize. One of the PKSs (PKS1 or PKS2) could synthesize a precursor, used subsequently by the other PKS as starter unit, to add additional carbons. Variability in the length of the final carbon backbone C35-47 could be achieved by varying the number of condensation cycles, or use of different starter or extender units or might be due to decarboxylation of the penultimate product, catalyzed by DEC1. Additional proteins are required for the biosynthesis of T-toxin, including oxidoreductases RED1, RED2, RED3, LAM1 and OXI1, as well as esterase TOX9. This chain is Dehydrogenase RED2, found in Cochliobolus heterostrophus (strain C4 / ATCC 48331 / race T) (Southern corn leaf blight fungus).